The chain runs to 444 residues: Phosphoglucosamine mutase (444 aa).

Serine 104 (phosphoserine intermediate) is an active-site residue. Residues serine 104, aspartate 243, aspartate 245, and aspartate 247 each coordinate Mg(2+). Serine 104 bears the Phosphoserine mark.

Belongs to the phosphohexose mutase family. Mg(2+) is required as a cofactor. Activated by phosphorylation.

The catalysed reaction is alpha-D-glucosamine 1-phosphate = D-glucosamine 6-phosphate. Functionally, catalyzes the conversion of glucosamine-6-phosphate to glucosamine-1-phosphate. The polypeptide is Phosphoglucosamine mutase (Neisseria gonorrhoeae (strain ATCC 700825 / FA 1090)).